A 180-amino-acid chain; its full sequence is Nucleoside-triphosphatase THEP1 (180 aa).

Residues 9 to 16 (GPAGVGKT) and 104 to 111 (LIVIDEIG) contribute to the ATP site.

It belongs to the THEP1 NTPase family.

The catalysed reaction is a ribonucleoside 5'-triphosphate + H2O = a ribonucleoside 5'-diphosphate + phosphate + H(+). Its function is as follows. Has nucleotide phosphatase activity towards ATP, GTP, CTP, TTP and UTP. May hydrolyze nucleoside diphosphates with lower efficiency. The protein is Nucleoside-triphosphatase THEP1 of Thermococcus kodakarensis (strain ATCC BAA-918 / JCM 12380 / KOD1) (Pyrococcus kodakaraensis (strain KOD1)).